A 374-amino-acid polypeptide reads, in one-letter code: MQPGPALQAVLLAVLLSEPRSSKGRLLSGQLVCRGGTRRPCYKVIYFHDAFQRLNFEEAKEACRRDGGQLVSIETEDEQRLIEKFIENLLASDGDFWIGLRRLEVKQVNNTACQDLYAWTDGSTSQFRNWYVDEPSCGSEVCVVMYHQPSAPPGIGGSYMFQWNDDRCNMKNNFICKYADEKPSTTPSIRPGGEATEPPTPVLPEETQKEDTKETFKESREAALNLAYILIPSIPLFLLLVVTSAACWVWICRRRKQEQPDPTTKEQHTIWPTPHQENSPNLDVYNVIRKQSEADLTEPRPDLKNISFRVCSSEAPPDDISCDYDNMAVNPSESGFVTLASMESGFVTNDIYEFSPDRMGRSKESGWVENEIYY.

The signal sequence occupies residues 1 to 24; it reads MQPGPALQAVLLAVLLSEPRSSKG. Over 25–221 the chain is Extracellular; it reads RLLSGQLVCR…TKETFKESRE (197 aa). The C-type lectin domain maps to 37 to 177; that stretch reads TRRPCYKVIY…CNMKNNFICK (141 aa). Cystine bridges form between C63/C176 and C142/C168. N109 carries an N-linked (GlcNAc...) asparagine glycan. The interval 184–212 is disordered; the sequence is STTPSIRPGGEATEPPTPVLPEETQKEDT. A helical membrane pass occupies residues 222–242; that stretch reads AALNLAYILIPSIPLFLLLVV. Residues 243-374 lie on the Cytoplasmic side of the membrane; sequence TSAACWVWIC…SGWVENEIYY (132 aa). Residues S279 and S292 each carry the phosphoserine modification. The tract at residues 323–367 is interaction with NF2; it reads DYDNMAVNPSESGFVTLASMESGFVTNDIYEFSPDRMGRSKESGW. The interaction with TLN1 stretch occupies residues 330 to 374; it reads NPSESGFVTLASMESGFVTNDIYEFSPDRMGRSKESGWVENEIYY. Repeat copies occupy residues 333–337, 343–347, 349–352, 364–368, and 370–373. Positions 333 to 368 are 3 X 5 AA repeats of E-S-G-X-V; sequence ESGFVTLASMESGFVTNDIYEFSPDRMGRSKESGWV. Positions 349-373 are 2 X 4 AA repeats of N-X-I-Y; the sequence is NDIYEFSPDRMGRSKESGWVENEIY.

Interacts with NF2 and RDX. Interacts with TLN1. As to expression, widely expressed. Abundant in the ovary.

It is found in the membrane. Functionally, receptor for hyaluronate. This chain is Layilin (LAYN), found in Cricetulus griseus (Chinese hamster).